Here is a 162-residue protein sequence, read N- to C-terminus: Large ribosomal subunit protein uL10 (162 aa).

It belongs to the universal ribosomal protein uL10 family. In terms of assembly, part of the ribosomal stalk of the 50S ribosomal subunit. The N-terminus interacts with L11 and the large rRNA to form the base of the stalk. The C-terminus forms an elongated spine to which L12 dimers bind in a sequential fashion forming a multimeric L10(L12)X complex.

Functionally, forms part of the ribosomal stalk, playing a central role in the interaction of the ribosome with GTP-bound translation factors. In Vibrio vulnificus (strain CMCP6), this protein is Large ribosomal subunit protein uL10.